Here is a 238-residue protein sequence, read N- to C-terminus: Large ribosomal subunit protein uL2 (238 aa).

The tract at residues 201–238 (PFGGGGRQHPGRPKTVSRNTPPGRKVGSIAARRTGVGH) is disordered.

Belongs to the universal ribosomal protein uL2 family. Part of the 50S ribosomal subunit. Forms a bridge to the 30S subunit in the 70S ribosome.

One of the primary rRNA binding proteins. Required for association of the 30S and 50S subunits to form the 70S ribosome, for tRNA binding and peptide bond formation. It has been suggested to have peptidyltransferase activity; this is somewhat controversial. Makes several contacts with the 16S rRNA in the 70S ribosome. This chain is Large ribosomal subunit protein uL2, found in Methanocella arvoryzae (strain DSM 22066 / NBRC 105507 / MRE50).